Reading from the N-terminus, the 250-residue chain is Snake venom serine protease pictobin (250 aa).

Residues 1 to 11 form the signal peptide; that stretch reads ANLLILQVSYA. Positions 12-17 are excised as a propeptide; that stretch reads QKSSEL. Residues 18–241 enclose the Peptidase S1 domain; that stretch reads VIGGDECNIN…HLHWILSIIA (224 aa). 5 disulfide bridges follow: Cys24–Cys155, Cys42–Cys58, Cys134–Cys202, Cys166–Cys181, and Cys192–Cys217. The active-site Charge relay system is the His57. 2 N-linked (GlcNAc...) asparagine glycosylation sites follow: Asn71 and Asn95. Asp102 functions as the Charge relay system in the catalytic mechanism. Residues Asn146 and Asn162 are each glycosylated (N-linked (GlcNAc...) asparagine). The active-site Charge relay system is the Ser196. A glycan (N-linked (GlcNAc...) asparagine) is linked at Asn243.

Belongs to the peptidase S1 family. Snake venom subfamily. As to quaternary structure, monomer. Expressed by the venom gland.

Its subcellular location is the secreted. Functionally, snake venom serine protease that may impair the hemostatic system of the prey. The polypeptide is Snake venom serine protease pictobin (Bothrops pictus (Desert lancehead)).